The sequence spans 427 residues: Trigger factor (427 aa).

The PPIase FKBP-type domain occupies 163 to 248 (GDTVVIDFVG…IHEVKAKEVP (86 aa)).

It belongs to the FKBP-type PPIase family. Tig subfamily.

The protein resides in the cytoplasm. The enzyme catalyses [protein]-peptidylproline (omega=180) = [protein]-peptidylproline (omega=0). Functionally, involved in protein export. Acts as a chaperone by maintaining the newly synthesized protein in an open conformation. Functions as a peptidyl-prolyl cis-trans isomerase. This is Trigger factor from Streptococcus pneumoniae serotype 4 (strain ATCC BAA-334 / TIGR4).